The following is a 66-amino-acid chain: uncharacterized protein (66 aa).

This is an uncharacterized protein from Archaeoglobus fulgidus (strain ATCC 49558 / DSM 4304 / JCM 9628 / NBRC 100126 / VC-16).